We begin with the raw amino-acid sequence, 159 residues long: RNA pyrophosphohydrolase (159 aa).

Residues 6-149 (GFRPNVGIIL…KREVYRRALK (144 aa)) enclose the Nudix hydrolase domain. The short motif at 38-59 (GGINDRESPEEALYRELNEEVG) is the Nudix box element.

It belongs to the Nudix hydrolase family. RppH subfamily. It depends on a divalent metal cation as a cofactor.

Functionally, accelerates the degradation of transcripts by removing pyrophosphate from the 5'-end of triphosphorylated RNA, leading to a more labile monophosphorylated state that can stimulate subsequent ribonuclease cleavage. This is RNA pyrophosphohydrolase from Ectopseudomonas mendocina (strain ymp) (Pseudomonas mendocina).